The sequence spans 99 residues: Aspartyl/glutamyl-tRNA(Asn/Gln) amidotransferase subunit C (99 aa).

It belongs to the GatC family. Heterotrimer of A, B and C subunits.

It catalyses the reaction L-glutamyl-tRNA(Gln) + L-glutamine + ATP + H2O = L-glutaminyl-tRNA(Gln) + L-glutamate + ADP + phosphate + H(+). It carries out the reaction L-aspartyl-tRNA(Asn) + L-glutamine + ATP + H2O = L-asparaginyl-tRNA(Asn) + L-glutamate + ADP + phosphate + 2 H(+). Its function is as follows. Allows the formation of correctly charged Asn-tRNA(Asn) or Gln-tRNA(Gln) through the transamidation of misacylated Asp-tRNA(Asn) or Glu-tRNA(Gln) in organisms which lack either or both of asparaginyl-tRNA or glutaminyl-tRNA synthetases. The reaction takes place in the presence of glutamine and ATP through an activated phospho-Asp-tRNA(Asn) or phospho-Glu-tRNA(Gln). The protein is Aspartyl/glutamyl-tRNA(Asn/Gln) amidotransferase subunit C of Mycobacterium marinum (strain ATCC BAA-535 / M).